The following is a 369-amino-acid chain: Caffeine synthase 1 (369 aa).

Tyrosine 24 lines the S-adenosyl-L-homocysteine pocket. A caffeine-binding site is contributed by threonine 31. Residues cysteine 66, asparagine 71, aspartate 103, leucine 104, serine 138, and phenylalanine 139 each contribute to the S-adenosyl-L-homocysteine site. Positions 156, 159, and 160 each coordinate caffeine. Residue asparagine 177 participates in Mg(2+) binding. Arginine 225 is a caffeine binding site. 3 residues coordinate Mg(2+): aspartate 263, phenylalanine 265, and asparagine 266. Phenylalanine 321 contacts caffeine.

Belongs to the methyltransferase superfamily. Type-7 methyltransferase family. Mg(2+) is required as a cofactor.

The catalysed reaction is theobromine + S-adenosyl-L-methionine = caffeine + S-adenosyl-L-homocysteine + H(+). It catalyses the reaction 7-methylxanthine + S-adenosyl-L-methionine = theobromine + S-adenosyl-L-homocysteine + H(+). Its pathway is alkaloid biosynthesis. Its function is as follows. Involved in the biosynthesis of caffeine. Catalyzes the conversion of 7-methylxanthine (7mX) to theobromine and of theobromine to caffeine. The sequence is that of Caffeine synthase 1 from Camellia taliensis (Wild tea).